An 86-amino-acid polypeptide reads, in one-letter code: MANIKSQQKRILTNERRRLRNKSVKSSLHTAVRGFRAAVEAGDKDKAGELLASTSRKLDKAASKGVIHKNQAANRKSALAKALQKI.

It belongs to the bacterial ribosomal protein bS20 family.

In terms of biological role, binds directly to 16S ribosomal RNA. The chain is Small ribosomal subunit protein bS20 from Mycolicibacterium vanbaalenii (strain DSM 7251 / JCM 13017 / BCRC 16820 / KCTC 9966 / NRRL B-24157 / PYR-1) (Mycobacterium vanbaalenii).